A 138-amino-acid chain; its full sequence is Translation initiation factor 5A (138 aa).

Hypusine is present on Lys37.

It belongs to the eIF-5A family.

It is found in the cytoplasm. Functionally, functions by promoting the formation of the first peptide bond. In Pyrococcus horikoshii (strain ATCC 700860 / DSM 12428 / JCM 9974 / NBRC 100139 / OT-3), this protein is Translation initiation factor 5A (eif5a).